The sequence spans 264 residues: S-adenosylmethionine decarboxylase proenzyme (264 aa).

The Schiff-base intermediate with substrate; via pyruvic acid role is filled by Ser-113. At Ser-113 the chain carries Pyruvic acid (Ser); by autocatalysis. His-118 (proton acceptor; for processing activity) is an active-site residue. Cys-141 functions as the Proton donor; for catalytic activity in the catalytic mechanism.

It belongs to the prokaryotic AdoMetDC family. Type 2 subfamily. Heterooctamer of four alpha and four beta chains arranged as a tetramer of alpha/beta heterodimers. Pyruvate serves as cofactor. In terms of processing, is synthesized initially as an inactive proenzyme. Formation of the active enzyme involves a self-maturation process in which the active site pyruvoyl group is generated from an internal serine residue via an autocatalytic post-translational modification. Two non-identical subunits are generated from the proenzyme in this reaction, and the pyruvate is formed at the N-terminus of the alpha chain, which is derived from the carboxyl end of the proenzyme. The post-translation cleavage follows an unusual pathway, termed non-hydrolytic serinolysis, in which the side chain hydroxyl group of the serine supplies its oxygen atom to form the C-terminus of the beta chain, while the remainder of the serine residue undergoes an oxidative deamination to produce ammonia and the pyruvoyl group blocking the N-terminus of the alpha chain.

It catalyses the reaction S-adenosyl-L-methionine + H(+) = S-adenosyl 3-(methylsulfanyl)propylamine + CO2. The protein operates within amine and polyamine biosynthesis; S-adenosylmethioninamine biosynthesis; S-adenosylmethioninamine from S-adenosyl-L-methionine: step 1/1. Its function is as follows. Catalyzes the decarboxylation of S-adenosylmethionine to S-adenosylmethioninamine (dcAdoMet), the propylamine donor required for the synthesis of the polyamines spermine and spermidine from the diamine putrescine. The polypeptide is S-adenosylmethionine decarboxylase proenzyme (Stenotrophomonas maltophilia (strain K279a)).